The following is a 319-amino-acid chain: Acetyl-coenzyme A carboxylase carboxyl transferase subunit alpha (319 aa).

Positions 35 to 296 (DLEKEIKQLE…KQRLLEQLKE (262 aa)) constitute a CoA carboxyltransferase C-terminal domain.

This sequence belongs to the AccA family. As to quaternary structure, acetyl-CoA carboxylase is a heterohexamer composed of biotin carboxyl carrier protein (AccB), biotin carboxylase (AccC) and two subunits each of ACCase subunit alpha (AccA) and ACCase subunit beta (AccD).

Its subcellular location is the cytoplasm. It carries out the reaction N(6)-carboxybiotinyl-L-lysyl-[protein] + acetyl-CoA = N(6)-biotinyl-L-lysyl-[protein] + malonyl-CoA. The protein operates within lipid metabolism; malonyl-CoA biosynthesis; malonyl-CoA from acetyl-CoA: step 1/1. Functionally, component of the acetyl coenzyme A carboxylase (ACC) complex. First, biotin carboxylase catalyzes the carboxylation of biotin on its carrier protein (BCCP) and then the CO(2) group is transferred by the carboxyltransferase to acetyl-CoA to form malonyl-CoA. The protein is Acetyl-coenzyme A carboxylase carboxyl transferase subunit alpha of Aliivibrio fischeri (strain MJ11) (Vibrio fischeri).